A 264-amino-acid chain; its full sequence is 3-methyl-2-oxobutanoate hydroxymethyltransferase (264 aa).

The Mg(2+) site is built by D45 and D84. 3-methyl-2-oxobutanoate is bound by residues 45–46 (DS), D84, and K112. A Mg(2+)-binding site is contributed by E114. E181 (proton acceptor) is an active-site residue.

This sequence belongs to the PanB family. Homodecamer; pentamer of dimers. It depends on Mg(2+) as a cofactor.

It is found in the cytoplasm. It carries out the reaction 3-methyl-2-oxobutanoate + (6R)-5,10-methylene-5,6,7,8-tetrahydrofolate + H2O = 2-dehydropantoate + (6S)-5,6,7,8-tetrahydrofolate. It participates in cofactor biosynthesis; (R)-pantothenate biosynthesis; (R)-pantoate from 3-methyl-2-oxobutanoate: step 1/2. In terms of biological role, catalyzes the reversible reaction in which hydroxymethyl group from 5,10-methylenetetrahydrofolate is transferred onto alpha-ketoisovalerate to form ketopantoate. This is 3-methyl-2-oxobutanoate hydroxymethyltransferase from Escherichia coli (strain K12 / MC4100 / BW2952).